The chain runs to 236 residues: ATP synthase subunit a (236 aa).

A run of 5 helical transmembrane segments spans residues 18-38 (STVM…FIST), 79-99 (GITL…FSIV), 112-132 (DPTV…FYGV), 174-194 (IYAG…GAVG), and 205-227 (WQGF…TMVY).

The protein belongs to the ATPase A chain family. In terms of assembly, F-type ATPases have 2 components, CF(1) - the catalytic core - and CF(0) - the membrane proton channel. CF(1) has five subunits: alpha(3), beta(3), gamma(1), delta(1), epsilon(1). CF(0) has three main subunits: a(1), b(2) and c(9-12). The alpha and beta chains form an alternating ring which encloses part of the gamma chain. CF(1) is attached to CF(0) by a central stalk formed by the gamma and epsilon chains, while a peripheral stalk is formed by the delta and b chains.

It is found in the cell membrane. Key component of the proton channel; it plays a direct role in the translocation of protons across the membrane. The sequence is that of ATP synthase subunit a from Lysinibacillus sphaericus (strain C3-41).